Reading from the N-terminus, the 451-residue chain is Tubulin gamma-2 chain (451 aa).

Ser131 carries the phosphoserine; by BRSK1 modification. 142-148 lines the GTP pocket; that stretch reads AGGTGSG.

Belongs to the tubulin family. As to quaternary structure, component of the gamma-tubulin ring complex (gTuRC) consisting of TUBGCP2, TUBGCP3, TUBGCP4, TUBGCP5 and TUBGCP6 and gamma-tubulin TUBG1 or TUBG2. TUBGCP2, TUBGCP3, TUBGCP4, TUBGCP5 and TUBGCP6 assemble in a 5:5:2:1:1 stoichiometry; each is associated with a gamma-tubulin, thereby arranging 14 gamma-tubulins in a helical manner. Gamma-tubulin at the first position is blocked by TUBGCP3 at the last position, allowing 13 protafilaments to grow into a microtubule. Interacts with alpha-beta tubulin heterodimers; the interaction allows microtubules to nucleate from the gTuRC. Post-translationally, phosphorylation at Ser-131 by BRSK1 regulates centrosome duplication, possibly by mediating relocation of gamma-tubulin and its associated proteins from the cytoplasm to the centrosome.

Its subcellular location is the cytoplasm. The protein resides in the cytoskeleton. It localises to the microtubule organizing center. It is found in the centrosome. Its function is as follows. Tubulin is the major constituent of microtubules, protein filaments consisting of alpha- and beta-tubulin heterodimers. Gamma-tubulin is a key component of the gamma-tubulin ring complex (gTuRC) which mediates microtubule nucleation. The gTuRC regulates the minus-end nucleation of alpha-beta tubulin heterodimers that grow into microtubule protafilaments, a critical step in centrosome duplication and spindle formation. The chain is Tubulin gamma-2 chain (Tubg2) from Mus musculus (Mouse).